Reading from the N-terminus, the 324-residue chain is Aspartate carbamoyltransferase catalytic subunit (324 aa).

Carbamoyl phosphate is bound by residues Arg71 and Thr72. L-aspartate is bound at residue Lys99. Residues Arg121, His151, and Gln154 each contribute to the carbamoyl phosphate site. Arg184 and Arg239 together coordinate L-aspartate. Carbamoyl phosphate is bound by residues Gly280 and Pro281.

It belongs to the aspartate/ornithine carbamoyltransferase superfamily. ATCase family. As to quaternary structure, heterododecamer (2C3:3R2) of six catalytic PyrB chains organized as two trimers (C3), and six regulatory PyrI chains organized as three dimers (R2).

The enzyme catalyses carbamoyl phosphate + L-aspartate = N-carbamoyl-L-aspartate + phosphate + H(+). The protein operates within pyrimidine metabolism; UMP biosynthesis via de novo pathway; (S)-dihydroorotate from bicarbonate: step 2/3. In terms of biological role, catalyzes the condensation of carbamoyl phosphate and aspartate to form carbamoyl aspartate and inorganic phosphate, the committed step in the de novo pyrimidine nucleotide biosynthesis pathway. This is Aspartate carbamoyltransferase catalytic subunit from Cupriavidus necator (strain ATCC 17699 / DSM 428 / KCTC 22496 / NCIMB 10442 / H16 / Stanier 337) (Ralstonia eutropha).